We begin with the raw amino-acid sequence, 880 residues long: Alanine--tRNA ligase (880 aa).

Positions 568, 572, 670, and 674 each coordinate Zn(2+).

Belongs to the class-II aminoacyl-tRNA synthetase family. It depends on Zn(2+) as a cofactor.

The protein resides in the cytoplasm. It catalyses the reaction tRNA(Ala) + L-alanine + ATP = L-alanyl-tRNA(Ala) + AMP + diphosphate. Functionally, catalyzes the attachment of alanine to tRNA(Ala) in a two-step reaction: alanine is first activated by ATP to form Ala-AMP and then transferred to the acceptor end of tRNA(Ala). Also edits incorrectly charged Ser-tRNA(Ala) and Gly-tRNA(Ala) via its editing domain. This Ligilactobacillus salivarius (strain UCC118) (Lactobacillus salivarius) protein is Alanine--tRNA ligase.